The following is a 100-amino-acid chain: NADH-quinone oxidoreductase subunit K 1 (100 aa).

The next 3 helical transmembrane spans lie at 4 to 24, 29 to 49, and 60 to 80; these read LNNY…GVLV, IVIF…FIAF, and IFVF…LALM.

It belongs to the complex I subunit 4L family. As to quaternary structure, NDH-1 is composed of 14 different subunits. Subunits NuoA, H, J, K, L, M, N constitute the membrane sector of the complex.

The protein localises to the cell inner membrane. The catalysed reaction is a quinone + NADH + 5 H(+)(in) = a quinol + NAD(+) + 4 H(+)(out). NDH-1 shuttles electrons from NADH, via FMN and iron-sulfur (Fe-S) centers, to quinones in the respiratory chain. The immediate electron acceptor for the enzyme in this species is believed to be ubiquinone. Couples the redox reaction to proton translocation (for every two electrons transferred, four hydrogen ions are translocated across the cytoplasmic membrane), and thus conserves the redox energy in a proton gradient. This is NADH-quinone oxidoreductase subunit K 1 from Geotalea daltonii (strain DSM 22248 / JCM 15807 / FRC-32) (Geobacter daltonii).